A 37-amino-acid chain; its full sequence is Large ribosomal subunit protein bL36 (37 aa).

It belongs to the bacterial ribosomal protein bL36 family.

This is Large ribosomal subunit protein bL36 from Salinispora arenicola (strain CNS-205).